We begin with the raw amino-acid sequence, 191 residues long: Large ribosomal subunit protein bL9 (191 aa).

The segment at 171–191 (EDALKPEDFFNPEAELESEEE) is disordered.

The protein belongs to the bacterial ribosomal protein bL9 family.

In terms of biological role, binds to the 23S rRNA. This is Large ribosomal subunit protein bL9 from Rhizobium meliloti (strain 1021) (Ensifer meliloti).